The primary structure comprises 284 residues: MSMLPSFGFTQEQVACVCEVLQQGGNLERLGRFLWSLPACDHLHKNESVLKAKAVVAFHRGNFRELYKILESHQFSPHNHPKLQQLWLKAHYVEAEKLRGRPLGAVGKYRVRRKFPLPRTIWDGEETSYCFKEKSRGVLREWYAHNPYPSPREKRELAEATGLTTTQVSNWFKNRRQRDRAAEAKERENTENNNSSSNKQNQLSPLEGGKPLMSSSEEEFSPPQSPDQNSVLLLQGNMGHARSSNYSLPGLTASQPSHGLQTHQHQLQDSLLGPLTSSLVDLGS.

The segment at residues 124 to 183 is a DNA-binding region (homeobox); it reads GEETSYCFKEKSRGVLREWYAHNPYPSPREKRELAEATGLTTTQVSNWFKNRRQRDRAAE. Residues 168–269 are disordered; it reads VSNWFKNRRQ…LQTHQHQLQD (102 aa). Residues 179 to 190 are compositionally biased toward basic and acidic residues; it reads DRAAEAKERENT. Residues 242 to 269 are compositionally biased toward polar residues; the sequence is RSSNYSLPGLTASQPSHGLQTHQHQLQD.

The protein belongs to the SIX/Sine oculis homeobox family. Interacts with DACH1. Interacts with EYA1. Interacts with EYA2. Interacts with CDH1. Interacts with TBX18. Interacts with CEBPA. Interacts with CEBPB. Interacts with EBF2. Post-translationally, phosphorylated during interphase; becomes hyperphosphorylated during mitosis. Hyperphosphorylation impairs binding to promoter elements. Ubiquitinated by the anaphase promoting complex (APC), leading to its proteasomal degradation. Specifically expressed in skeletal muscle.

It is found in the nucleus. Its subcellular location is the cytoplasm. Functionally, transcription factor that is involved in the regulation of cell proliferation, apoptosis and embryonic development. Plays an important role in the development of several organs, including kidney, muscle and inner ear. Depending on context, functions as a transcriptional repressor or activator. Lacks an activation domain, and requires interaction with EYA family members for transcription activation. Mediates nuclear translocation of EYA1 and EYA2. Binds the 5'-TCA[AG][AG]TTNC-3' motif present in the MEF3 element in the MYOG promoter and CIDEA enhancer. Regulates the expression of numerous genes, including MYC, CCND1 and EZR. Acts as an activator of the IGFBP5 promoter, probably coactivated by EYA2. Repression of precursor cell proliferation in myoblasts is switched to activation through recruitment of EYA3 to the SIX1-DACH1 complex. During myogenesis, seems to act together with EYA2 and DACH2. Regulates the expression of CCNA1. Promotes brown adipocyte differentiation. This is Homeobox protein SIX1 (SIX1) from Homo sapiens (Human).